The chain runs to 320 residues: Glucosaminate ammonia-lyase (320 aa).

Residue 36 to 43 (TGMQAGGQ) participates in FAD binding. Cysteine 136 and cysteine 139 are oxidised to a cystine. 285–294 (DVADHVYRQA) contacts FAD.

The protein belongs to the class-II pyridine nucleotide-disulfide oxidoreductase family.

It catalyses the reaction 2-amino-2-deoxy-D-gluconate = 2-dehydro-3-deoxy-D-gluconate + NH4(+). Catalyzes the conversion of 2-amino-2-deoxy-D-gluconate (GlcNA) to 2-keto-3-deoxy-D-gluconic acid (KDGA) and ammonia. In Pseudomonas fluorescens, this protein is Glucosaminate ammonia-lyase.